A 312-amino-acid polypeptide reads, in one-letter code: Methionyl-tRNA formyltransferase (312 aa).

The segment at 34 to 54 (PDAASGRRGKPQPSPVAREAA) is disordered. Residue 110–113 (SLLP) coordinates (6S)-5,6,7,8-tetrahydrofolate.

The protein belongs to the Fmt family.

It carries out the reaction L-methionyl-tRNA(fMet) + (6R)-10-formyltetrahydrofolate = N-formyl-L-methionyl-tRNA(fMet) + (6S)-5,6,7,8-tetrahydrofolate + H(+). Functionally, attaches a formyl group to the free amino group of methionyl-tRNA(fMet). The formyl group appears to play a dual role in the initiator identity of N-formylmethionyl-tRNA by promoting its recognition by IF2 and preventing the misappropriation of this tRNA by the elongation apparatus. This chain is Methionyl-tRNA formyltransferase, found in Mycobacterium tuberculosis (strain ATCC 25177 / H37Ra).